A 450-amino-acid polypeptide reads, in one-letter code: 3-phosphoshikimate 1-carboxyvinyltransferase (450 aa).

The 3-phosphoshikimate site is built by K23, S24, and R28. Residue K23 coordinates phosphoenolpyruvate. Residues G96 and R124 each coordinate phosphoenolpyruvate. The 3-phosphoshikimate site is built by S167, S168, Q169, S196, E311, and H340. Q169 is a phosphoenolpyruvate binding site. Catalysis depends on E311, which acts as the Proton acceptor. R344, R385, and K410 together coordinate phosphoenolpyruvate. A disordered region spans residues 426–450 (GQGWGYPQPRSGQRARRATGQGSGG).

This sequence belongs to the EPSP synthase family. As to quaternary structure, monomer.

Its subcellular location is the cytoplasm. The enzyme catalyses 3-phosphoshikimate + phosphoenolpyruvate = 5-O-(1-carboxyvinyl)-3-phosphoshikimate + phosphate. It functions in the pathway metabolic intermediate biosynthesis; chorismate biosynthesis; chorismate from D-erythrose 4-phosphate and phosphoenolpyruvate: step 6/7. In terms of biological role, catalyzes the transfer of the enolpyruvyl moiety of phosphoenolpyruvate (PEP) to the 5-hydroxyl of shikimate-3-phosphate (S3P) to produce enolpyruvyl shikimate-3-phosphate and inorganic phosphate. In Mycobacterium bovis (strain ATCC BAA-935 / AF2122/97), this protein is 3-phosphoshikimate 1-carboxyvinyltransferase.